A 326-amino-acid chain; its full sequence is Ribose-phosphate pyrophosphokinase 4 (326 aa).

4 residues coordinate Mg(2+): aspartate 140, histidine 142, histidine 151, and aspartate 155.

The protein belongs to the ribose-phosphate pyrophosphokinase family.

It is found in the cytoplasm. It carries out the reaction D-ribose 5-phosphate + ATP = 5-phospho-alpha-D-ribose 1-diphosphate + AMP + H(+). It participates in metabolic intermediate biosynthesis; 5-phospho-alpha-D-ribose 1-diphosphate biosynthesis; 5-phospho-alpha-D-ribose 1-diphosphate from D-ribose 5-phosphate (route I): step 1/1. Functionally, 5-phosphoribose 1-diphosphate synthase involved in nucleotide, histidine, and tryptophan biosynthesis. Active in heteromultimeric complexes with other 5-phosphoribose 1-diphosphate synthases (PRS2, PRS3, PRS4 and PRS5). The chain is Ribose-phosphate pyrophosphokinase 4 (PRS4) from Saccharomyces cerevisiae (strain ATCC 204508 / S288c) (Baker's yeast).